Reading from the N-terminus, the 146-residue chain is MKDELNKVVIYTDGACSGNPGPGGWGAILLFDKNERTICGNNPDTTNNRMELTAVIEALKFLKVAYNVDLYTDSIYVKDGITLWIEKWKINGWRTASKLPVKNLELWLELDSLASFHNVTWYWVKAHAGNLYNQKADILARSQISK.

Residues 4–145 (ELNKVVIYTD…ADILARSQIS (142 aa)) enclose the RNase H type-1 domain. The Mg(2+) site is built by Asp13, Glu51, Asp73, and Asp137.

The protein belongs to the RNase H family. Monomer. Requires Mg(2+) as cofactor.

Its subcellular location is the cytoplasm. The enzyme catalyses Endonucleolytic cleavage to 5'-phosphomonoester.. Endonuclease that specifically degrades the RNA of RNA-DNA hybrids. This is Ribonuclease H from Ehrlichia canis (strain Jake).